Here is a 496-residue protein sequence, read N- to C-terminus: Inosine-5'-monophosphate dehydrogenase (496 aa).

2 consecutive CBS domains span residues 96–152 (VIKD…TKKV) and 156–212 (MTKD…PQAA). Residues Asp247 and 299-301 (GIG) contribute to the NAD(+) site. K(+)-binding residues include Gly301 and Gly303. Ser304 provides a ligand contact to IMP. Cys306 provides a ligand contact to K(+). Cys306 (thioimidate intermediate) is an active-site residue. IMP contacts are provided by residues 339 to 341 (DGG), 362 to 363 (GS), and 386 to 390 (YRGMG). Residue Arg405 is the Proton acceptor of the active site. Glu423 is a binding site for IMP. Positions 477, 478, and 479 each coordinate K(+).

The protein belongs to the IMPDH/GMPR family. As to quaternary structure, homotetramer. K(+) is required as a cofactor.

It carries out the reaction IMP + NAD(+) + H2O = XMP + NADH + H(+). It participates in purine metabolism; XMP biosynthesis via de novo pathway; XMP from IMP: step 1/1. With respect to regulation, mycophenolic acid (MPA) is a non-competitive inhibitor that prevents formation of the closed enzyme conformation by binding to the same site as the amobile flap. In contrast, mizoribine monophosphate (MZP) is a competitive inhibitor that induces the closed conformation. MPA is a potent inhibitor of mammalian IMPDHs but a poor inhibitor of the bacterial enzymes. MZP is a more potent inhibitor of bacterial IMPDH. Its function is as follows. Catalyzes the conversion of inosine 5'-phosphate (IMP) to xanthosine 5'-phosphate (XMP), the first committed and rate-limiting step in the de novo synthesis of guanine nucleotides, and therefore plays an important role in the regulation of cell growth. The chain is Inosine-5'-monophosphate dehydrogenase from Methanocaldococcus jannaschii (strain ATCC 43067 / DSM 2661 / JAL-1 / JCM 10045 / NBRC 100440) (Methanococcus jannaschii).